Reading from the N-terminus, the 499-residue chain is Neuronal acetylcholine receptor subunit alpha-7 (499 aa).

An N-terminal signal peptide occupies residues 1 to 19 (MRGSLCLALAASILHVSLQ). Residues 20–230 (GEFQRKLYKD…VSIRRRTLYY (211 aa)) lie on the Extracellular side of the membrane. Residues arginine 39 and valine 41 each coordinate Ca(2+). N-linked (GlcNAc...) asparagine glycans are attached at residues asparagine 43, asparagine 87, and asparagine 130. An intrachain disulfide couples cysteine 147 to cysteine 161. Ca(2+) contacts are provided by serine 169 and tyrosine 207. Cysteine 209 and cysteine 210 are disulfide-bonded. The next 3 helical transmembrane spans lie at 231 to 251 (GLNL…VFLL), 259 to 279 (ISLG…VAEI), and 292 to 312 (QYFA…VIVL). The essential for TMEM35A/NACHO-mediated proper subunit assembly and trafficking to cell membrane stretch occupies residues 257-264 (EKISLGIT). The Cytoplasmic segment spans residues 313 to 466 (QYHHHDPDGG…WKFAACVVDR (154 aa)). The chain crosses the membrane as a helical span at residues 467–487 (LCLMAFSVFTILCTIGILMSA).

Belongs to the ligand-gated ion channel (TC 1.A.9) family. Acetylcholine receptor (TC 1.A.9.1) subfamily. Alpha-7/CHRNA7 sub-subfamily. Homopentamer. Homooligomer of the short form gives rise to unfunctional channels, as does coexpression of both long and short forms of the receptor. Can also form heteropentamers with CHRNB2, mainly found in basal forebrain cholinergic neurons. Interacts with RIC3; which is required for proper folding and assembly. Interacts with LYPD6. Interacts with CANX. Glycosylations at Asn-43, Asn-87 and Asn-130 are essential for TMEM35A/NACHO-mediated proper subunit assembly and trafficking to the cell membrane. At least in chromaffin cells.

It localises to the postsynaptic cell membrane. The protein resides in the cell membrane. It catalyses the reaction Ca(2+)(in) = Ca(2+)(out). It carries out the reaction K(+)(in) = K(+)(out). The catalysed reaction is Na(+)(in) = Na(+)(out). The enzyme catalyses choline(out) = choline(in). It catalyses the reaction NH4(+)(in) = NH4(+)(out). It carries out the reaction L-arginine(in) = L-arginine(out). The catalysed reaction is guanidine(out) = guanidine(in). Activated by a myriad of ligands such as acetylcholine, cytisine, nicotine, choline and epibatidine. Oligomeric amyloid-beta protein 42 activates specifially CHRNA7:CHRNB2 nAchRs. Activity is modulated by positive allosteric modulators (PAMs), such as flavonoids, with a wide range of chemical diversity, pharmacological sensitivity and efficacy. AChR activity is inhibited by the antagonists alpha-conotoxons RgIA, ImI and ImII, small disulfide-constrained peptides from cone snails. Alpha-conotoxin PnIC selectively inhibits CHRNA7:CHRNB2 over CHRNA7 homopentamer. Component of neuronal acetylcholine receptors (nAChRs) that function as pentameric, ligand-gated cation channels with high calcium permeability among other activities. nAChRs are excitatory neurotrasnmitter receptors formed by a collection of nAChR subunits known to mediate synaptic transmission in the nervous system and the neuromuscular junction. Each nAchR subunit confers differential attributes to channel properties, including activation, deactivation and desensitization kinetics, pH sensitivity, cation permeability, and binding to allosteric modulators. CHRNA7 forms homopentameric neuronal acetylcholine receptors abundantly expressed in the central nervous system, characterized by fast desensitization and high calcium permeability. Also forms heteropentamers with CHRNB2, mainly expressed in basal forebrain cholinergic neurons. Involved in the modulation of calcium-dependent signaling pathways and influences the release of neurotransmitters, including dopamine, glutamate and GABA. Also expressed in non-neuronal cells such as immune cells like lymphocytes, monocytes and macrophages. In T cells, activation induces metabotropic signaling that results in an increase of intracellular Ca2+ concentrations, independent of ionotropic receptor functions. In macrophages, required for acetylcholine-mediated inhibition of TNF and other inflammatory cytokine release. Once activated by acetylcholine, nicotine or other agonists, selectively inhibits production of pro-inflammatory cytokines while leaving anti-inflammatory cytokines undisturbed. Stimulates the cholinergic anti-inflammatory pathway, controlling inflammation by inhibiting NFKB nuclear translocation and activating the JAK2-STAT3 pathway, independently of ion channel activity. Also expressed in the urothelium where it modulates reflex bladder activity by increasing intracellular calcium through internal stores and decreasing basal ATP release. In Bos taurus (Bovine), this protein is Neuronal acetylcholine receptor subunit alpha-7 (CHRNA7).